The chain runs to 332 residues: Geranylgeranyl diphosphate synthase (332 aa).

The isopentenyl diphosphate site is built by Lys45, Arg48, and His77. Residues Asp84 and Asp88 each contribute to the Mg(2+) site. An an all-trans-polyprenyl diphosphate-binding site is contributed by Arg93. Arg94 is a binding site for isopentenyl diphosphate. Positions 177, 178, 215, 232, and 242 each coordinate an all-trans-polyprenyl diphosphate.

The protein belongs to the FPP/GGPP synthase family. Requires Mg(2+) as cofactor.

The enzyme catalyses isopentenyl diphosphate + (2E,6E)-farnesyl diphosphate = (2E,6E,10E)-geranylgeranyl diphosphate + diphosphate. The protein operates within isoprenoid biosynthesis; geranylgeranyl diphosphate biosynthesis; geranylgeranyl diphosphate from farnesyl diphosphate and isopentenyl diphosphate: step 1/1. In terms of biological role, catalyzes the condensation of isopentenyl pyrophosphate with the allylic pyrophosphates to yield geranylgeranyl diphosphate (GGPP) which is a precursor of the ether-linked lipids. This Saccharolobus solfataricus (strain ATCC 35092 / DSM 1617 / JCM 11322 / P2) (Sulfolobus solfataricus) protein is Geranylgeranyl diphosphate synthase (gds).